Consider the following 698-residue polypeptide: Polyribonucleotide nucleotidyltransferase (698 aa).

Positions 485 and 491 each coordinate Mg(2+). One can recognise a KH domain in the interval 552-612 (PRVEMMTIPE…SDLKGAKSIV (61 aa)). The region spanning 622 to 690 (GMVYDGTVKK…KLGRLNLSYV (69 aa)) is the S1 motif domain.

It belongs to the polyribonucleotide nucleotidyltransferase family. Mg(2+) is required as a cofactor.

It localises to the cytoplasm. It carries out the reaction RNA(n+1) + phosphate = RNA(n) + a ribonucleoside 5'-diphosphate. Functionally, involved in mRNA degradation. Catalyzes the phosphorolysis of single-stranded polyribonucleotides processively in the 3'- to 5'-direction. This chain is Polyribonucleotide nucleotidyltransferase, found in Treponema denticola (strain ATCC 35405 / DSM 14222 / CIP 103919 / JCM 8153 / KCTC 15104).